Here is a 940-residue protein sequence, read N- to C-terminus: Isoleucine--tRNA ligase (940 aa).

The short motif at 59 to 69 (PYANGDIHIGH) is the 'HIGH' region element. Glutamate 563 contributes to the L-isoleucyl-5'-AMP binding site. Residues 604–608 (KMSKS) carry the 'KMSKS' region motif. Lysine 607 contacts ATP. Cysteine 903, cysteine 906, cysteine 923, and cysteine 926 together coordinate Zn(2+).

This sequence belongs to the class-I aminoacyl-tRNA synthetase family. IleS type 1 subfamily. Monomer. The cofactor is Zn(2+).

It localises to the cytoplasm. The enzyme catalyses tRNA(Ile) + L-isoleucine + ATP = L-isoleucyl-tRNA(Ile) + AMP + diphosphate. Catalyzes the attachment of isoleucine to tRNA(Ile). As IleRS can inadvertently accommodate and process structurally similar amino acids such as valine, to avoid such errors it has two additional distinct tRNA(Ile)-dependent editing activities. One activity is designated as 'pretransfer' editing and involves the hydrolysis of activated Val-AMP. The other activity is designated 'posttransfer' editing and involves deacylation of mischarged Val-tRNA(Ile). The chain is Isoleucine--tRNA ligase from Wigglesworthia glossinidia brevipalpis.